The following is a 259-amino-acid chain: UPF0246 protein SG0407 (259 aa).

This sequence belongs to the UPF0246 family.

The protein is UPF0246 protein SG0407 of Sodalis glossinidius (strain morsitans).